A 488-amino-acid polypeptide reads, in one-letter code: Cobyric acid synthase (488 aa).

In terms of domain architecture, GATase cobBQ-type spans 248–441 (VLRVVVPALP…VHGLFDTPAA (194 aa)). Cysteine 328 (nucleophile) is an active-site residue. Residue histidine 433 is part of the active site.

The protein belongs to the CobB/CobQ family. CobQ subfamily.

Its pathway is cofactor biosynthesis; adenosylcobalamin biosynthesis. In terms of biological role, catalyzes amidations at positions B, D, E, and G on adenosylcobyrinic A,C-diamide. NH(2) groups are provided by glutamine, and one molecule of ATP is hydrogenolyzed for each amidation. In Burkholderia vietnamiensis (strain G4 / LMG 22486) (Burkholderia cepacia (strain R1808)), this protein is Cobyric acid synthase.